The primary structure comprises 145 residues: Ribonuclease H (145 aa).

The region spanning 1–141 (MQEVTIYSDG…ADALANRGVE (141 aa)) is the RNase H type-1 domain. Mg(2+) contacts are provided by Asp9, Glu47, Asp69, and Asp133.

The protein belongs to the RNase H family. Monomer. It depends on Mg(2+) as a cofactor.

It is found in the cytoplasm. The catalysed reaction is Endonucleolytic cleavage to 5'-phosphomonoester.. Its function is as follows. Endonuclease that specifically degrades the RNA of RNA-DNA hybrids. The chain is Ribonuclease H from Cupriavidus necator (strain ATCC 17699 / DSM 428 / KCTC 22496 / NCIMB 10442 / H16 / Stanier 337) (Ralstonia eutropha).